The sequence spans 473 residues: Notchless protein homolog (473 aa).

The interval 9 to 91 (GKTVMCLLTD…VLTIVYQQQA (83 aa)) is ubiquitin-like (UBL) domain. WD repeat units follow at residues 107–146 (GHAE…PLFT), 149–188 (GHKN…LEGS), 192–236 (GHKK…SIIC), 239–277 (GHTL…LIRE), 313–354 (EKQK…QPKK), 358–399 (GHQQ…TVFR), 400–439 (GHVG…LKQD), and 442–473 (GHAD…LWKG). The DWD box signature appears at 417–432 (LLSGSKDSTLKIWEIR).

This sequence belongs to the NLE1/RSA4 family. In terms of assembly, associates with the pre-60S ribosomal particle. In terms of tissue distribution, constitutively and ubiquitously expressed.

It is found in the nucleus. The protein resides in the nucleolus. Required for female gametophyte development. The polypeptide is Notchless protein homolog (Arabidopsis thaliana (Mouse-ear cress)).